A 389-amino-acid chain; its full sequence is S-adenosylmethionine synthase (389 aa).

Residue H17 participates in ATP binding. D19 is a Mg(2+) binding site. Residue E45 coordinates K(+). Residues E58 and Q101 each coordinate L-methionine. Residues 101 to 111 form a flexible loop region; the sequence is QSPDISQGVTE. ATP contacts are provided by residues 168–170, 234–235, D243, 249–250, A266, and K270; these read DSK, RF, and RK. D243 contributes to the L-methionine binding site. K274 provides a ligand contact to L-methionine.

Belongs to the AdoMet synthase family. Homotetramer; dimer of dimers. Requires Mg(2+) as cofactor. It depends on K(+) as a cofactor.

The protein localises to the cytoplasm. The catalysed reaction is L-methionine + ATP + H2O = S-adenosyl-L-methionine + phosphate + diphosphate. Its pathway is amino-acid biosynthesis; S-adenosyl-L-methionine biosynthesis; S-adenosyl-L-methionine from L-methionine: step 1/1. In terms of biological role, catalyzes the formation of S-adenosylmethionine (AdoMet) from methionine and ATP. The overall synthetic reaction is composed of two sequential steps, AdoMet formation and the subsequent tripolyphosphate hydrolysis which occurs prior to release of AdoMet from the enzyme. The sequence is that of S-adenosylmethionine synthase from Syntrophotalea carbinolica (strain DSM 2380 / NBRC 103641 / GraBd1) (Pelobacter carbinolicus).